The primary structure comprises 115 residues: Gonadotropin subunit beta-2 (115 aa).

Intrachain disulfides connect Cys-6–Cys-54, Cys-20–Cys-69, Cys-23–Cys-107, Cys-31–Cys-85, Cys-35–Cys-87, and Cys-90–Cys-97. Asn-10 carries an N-linked (GlcNAc...) asparagine glycan.

It belongs to the glycoprotein hormones subunit beta family. Heterodimer of an alpha and a beta chain.

It localises to the secreted. In terms of biological role, involved in gametogenesis and steroidogenesis. This is Gonadotropin subunit beta-2 (cgbb) from Thunnus obesus (Bigeye tuna).